A 95-amino-acid chain; its full sequence is Protein TRACHEARY ELEMENT DIFFERENTIATION-RELATED 6 (95 aa).

Residues 1–3 (MAT) lie on the Extracellular side of the membrane. Residues 4-24 (IFIVFVSFGCVFVLGIAAFVL) traverse the membrane as a helical segment. The Cytoplasmic segment spans residues 25 to 95 (CCLIKKWKCS…KLGTASTSKA (71 aa)).

Interacts with the secondary cell wall (SCW)-related cellulose synthase complex. In terms of tissue distribution, accumulates in cells differentiating into tracheary element (TE) which undergo secondary cell wall (SCW) formation.

Its subcellular location is the cell membrane. The protein resides in the secreted. It localises to the cell wall. In terms of biological role, involved in the secondary cell wall (SCW) formation of vessel elements (e.g. protoxylem and metaxylem), thus promoting tracheary element (TE) differentiation. The polypeptide is Protein TRACHEARY ELEMENT DIFFERENTIATION-RELATED 6 (Zinnia elegans (Garden zinnia)).